We begin with the raw amino-acid sequence, 171 residues long: Ribosome maturation factor RimM (171 aa).

The PRC barrel domain maps to 96 to 168; that stretch reads EDGFYDHELE…TATITPPEGL (73 aa).

It belongs to the RimM family. As to quaternary structure, binds ribosomal protein uS19.

The protein resides in the cytoplasm. In terms of biological role, an accessory protein needed during the final step in the assembly of 30S ribosomal subunit, possibly for assembly of the head region. Essential for efficient processing of 16S rRNA. May be needed both before and after RbfA during the maturation of 16S rRNA. It has affinity for free ribosomal 30S subunits but not for 70S ribosomes. This chain is Ribosome maturation factor RimM, found in Corynebacterium glutamicum (strain ATCC 13032 / DSM 20300 / JCM 1318 / BCRC 11384 / CCUG 27702 / LMG 3730 / NBRC 12168 / NCIMB 10025 / NRRL B-2784 / 534).